Reading from the N-terminus, the 410-residue chain is Solute carrier family 52, riboflavin transporter, member 3 (410 aa).

3 helical membrane-spanning segments follow: residues Ile3–Leu23, Leu40–Leu60, and Val73–Leu93. Residue Asn157 is glycosylated (N-linked (GlcNAc...) asparagine). 6 consecutive transmembrane segments (helical) span residues Phe158 to Phe178, Phe239 to Leu259, Leu277 to Pro297, Leu301 to Met321, Ala334 to Val354, and Ala369 to Phe389.

Belongs to the riboflavin transporter family.

The protein resides in the cell membrane. The enzyme catalyses riboflavin(in) = riboflavin(out). In terms of biological role, plasma membrane transporter mediating the uptake by cells of the water soluble vitamin B2/riboflavin that plays a key role in biochemical oxidation-reduction reactions of the carbohydrate, lipid, and amino acid metabolism. The chain is Solute carrier family 52, riboflavin transporter, member 3 (slc52a3) from Osmerus mordax (Rainbow smelt).